A 1031-amino-acid chain; its full sequence is Error-prone DNA polymerase (1031 aa).

Belongs to the DNA polymerase type-C family. DnaE2 subfamily.

The protein localises to the cytoplasm. It carries out the reaction DNA(n) + a 2'-deoxyribonucleoside 5'-triphosphate = DNA(n+1) + diphosphate. Its function is as follows. DNA polymerase involved in damage-induced mutagenesis and translesion synthesis (TLS). It is not the major replicative DNA polymerase. The polypeptide is Error-prone DNA polymerase (Pseudomonas savastanoi pv. phaseolicola (strain 1448A / Race 6) (Pseudomonas syringae pv. phaseolicola (strain 1448A / Race 6))).